The chain runs to 305 residues: tRNA dimethylallyltransferase (305 aa).

11-18 (GPTAVGKT) contacts ATP. 13 to 18 (TAVGKT) lines the substrate pocket. The segment at 36 to 39 (DSMQ) is interaction with substrate tRNA.

It belongs to the IPP transferase family. In terms of assembly, monomer. Mg(2+) serves as cofactor.

It catalyses the reaction adenosine(37) in tRNA + dimethylallyl diphosphate = N(6)-dimethylallyladenosine(37) in tRNA + diphosphate. In terms of biological role, catalyzes the transfer of a dimethylallyl group onto the adenine at position 37 in tRNAs that read codons beginning with uridine, leading to the formation of N6-(dimethylallyl)adenosine (i(6)A). In Listeria monocytogenes serovar 1/2a (strain ATCC BAA-679 / EGD-e), this protein is tRNA dimethylallyltransferase.